We begin with the raw amino-acid sequence, 938 residues long: Myocardin (938 aa).

The MEF2C-binding motif lies at I12–R27. One copy of the RPEL 1 repeat lies at S18–K43. A compositionally biased stretch (basic and acidic residues) spans F48–K61. A disordered region spans residues F48–A68. RPEL repeat units lie at residues N62–T87 and D106–S131. The interval F153–N205 is HDAC5-binding. Positions E154–P281 are disordered. Composition is skewed to polar residues over residues S159–G177, D186–S203, and S210–A220. The span at N248–Y265 shows a compositional bias: basic residues. The region spanning L371 to Q405 is the SAP domain. Phosphoserine; by GSK3-beta is present on residues S451, S455, S459, and S463. The stretch at E516–K561 forms a coiled coil. S626, S630, S634, and S638 each carry phosphoserine; by GSK3-beta. Disordered regions lie at residues P635–I678 and S693–S734. Residues K699–S715 show a composition bias toward low complexity. The interval V717–W938 is required for interaction with and ubiquitination by STUB1. Phosphoserine; by MAPK1 and MAPK3 is present on residues S815, S862, and S869. Position 896 is a phosphothreonine; by MAPK1 and MAPK3 (T896).

Homodimer. Interacts with SRF, its association does not depend on specific DNA sequences for ternary complex formation. Interacts with MLLT7/FOXO4. Interacts (via C-terminal) with EP300 (via the CREB-binding domain). Interacts with HDAC4 and HDAC5. Interacts with MEF2C. Interacts (via C-terminus) with STUB1/CHIP. Interacts with PURB. In terms of processing, ubiquitinated; by STUB1/CHIP at the C-terminus, leading to its degradation by the proteasome. Phosphorylation by GSK3B is required for STUB1/CHIP-mediated ubiquitination. Post-translationally, phosphorylation negatively regulates the intrinsic myocardin transcriptional activity. Phosphorylated; by GSK3B. In terms of tissue distribution, expressed in the heart, aorta and bladder. Expressed in smooth muscle cell-containing tissues: stomach, small intestine, colon, lung, placenta and uterus. Very faint expression in prostate and skeletal muscle.

Its subcellular location is the nucleus. Smooth muscle cells (SM) and cardiac muscle cells-specific transcriptional factor which uses the canonical single or multiple CArG boxes DNA sequence. Acts as a cofactor of serum response factor (SRF) with the potential to modulate SRF-target genes. Plays a crucial role in cardiogenesis, urinary bladder development, and differentiation of the smooth muscle cell lineage (myogenesis). Positively regulates the transcription of genes involved in vascular smooth muscle contraction. This chain is Myocardin (MYOCD), found in Homo sapiens (Human).